Here is a 242-residue protein sequence, read N- to C-terminus: Phosphatidylethanolamine-binding protein 4 (242 aa).

The signal sequence occupies residues 1–26 (MTMKLVAAALCLSLLAAGLWVGLSLT). The tract at residues 31–50 (EEGKPGGEKPGGGKPGGSGR) is disordered. A compositionally biased stretch (gly residues) spans 38–50 (EKPGGGKPGGSGR). Residues Asn-77 and Asn-139 are each glycosylated (N-linked (GlcNAc...) asparagine). Residues 210 to 242 (DPDTSTQFMTQFDEELSSEFGRINDDQEQFNQK) form an important for secretion region.

Belongs to the phosphatidylethanolamine-binding protein family.

It localises to the secreted. In terms of biological role, promotes AKT phosphorylation, suggesting a possible role in the PI3K-AKT signaling pathway. This is Phosphatidylethanolamine-binding protein 4 (Pebp4) from Mus musculus (Mouse).